We begin with the raw amino-acid sequence, 782 residues long: MSTLKLIPFSTSIDKQFSGRTSILGGKCCLQIDGPKTTKKQSKILVEKIRERISNGKVVEISASAYDTAWVAMVPSREMSGRPSFPECLDWIVENQNPDGSWGLNPFLVKDSLSCTLACLLALRKWGLPNHLLHKGIEFIESNISRAATDDENQVAPIGFNIIFPAMISYAKELDLTLTLPPSSLNALLRARDSEMIRREGKWEYVGEGLGDSCNWNQIIQKHQSRNGSLFNSPATTAAAAIHCRDHKCFDYLISVVNKCNGWAPTVYPMDIYARLCMIDTLQRLGIDCHFRVELDAIFDEIYRNWQEREEEIFSDVTCQALAFRLLRVKGYDVSSDGLEEFVEQEGFFNSVSMQHSNVGTVLELYRASQTRINEEENTLQKIHAWTKPFLTQQLLNKTIRHKPLQMQVEYDLKNFYGTVDRFQHRRTIDLYDAQASQILKTAYRCSAIHNEDFIRFSVQNFKICRAEYQKELDEINKWYAYFGMDLLSKGRNACEQAYVVTAGLIADVELSMARISFAQVILLITVFDDVFDRYGTREEALAVIHLIKEILTHYRWKAAPKECSQLVKTTFTALYDTVNETAAKAHALQGFCFKQQIISLWEELLECAVREKESLSGKNVSTLDEYLSFAPVTIGCELCVLTAVHFLGIQVSEEMLTSAEMLTLCWHGNVVCRLLNDLKTYSREREEKTVNSVSVQVGVSEEEAVAKVKEVLEYHRRKVVEMVYQSQGSNVPRECKELVWKTCKVAHCFYGYDGDEFSSPRDIVDDIKAMMFLGLPHLSTH.

Positions 529, 533, 677, and 685 each coordinate Mg(2+). The short motif at 529–533 (DDVFD) is the DDXXD motif element.

This sequence belongs to the terpene synthase family. Mg(2+) serves as cofactor. Highly expressed in leaves, and, at low levels, in stems, but barely in roots and flowers.

It catalyses the reaction (+)-copalyl diphosphate = miltiradiene + diphosphate. It carries out the reaction (+)-copalyl diphosphate + H2O = nezukol + diphosphate. The protein operates within secondary metabolite biosynthesis; terpenoid biosynthesis. Functionally, involved in the biosynthesis of ent-kaurene diterpenoids natural products such as oridonin, miltiradiene, eriocalyxin B and nezukol, known to exhibit antitumor, anti-inflammatory and antibacterial activities. Catalyzes the conversion of (+)-copalyl diphosphate ((+)-CPP) to nezukol and miltiradiene. The reaction mechanism proceeds via the ionization of the diphosphate group of (+)-CPP, followed by formation of an intermediary pimar-15-en-8-yl(+) carbocation and neutralization of the carbocation by water capture at C-8 to yield nezukol. Can interact with ent-copalyl diphosphate (ent-CPP) but seems unable to use it as substrate. In Isodon rubescens (Rabdosia rubescens), this protein is Nezukol synthase KSL3.